We begin with the raw amino-acid sequence, 339 residues long: UDP-N-acetylglucosamine--N-acetylmuramyl-(pentapeptide) pyrophosphoryl-undecaprenol N-acetylglucosamine transferase (339 aa).

Residues 9–11, Asn-119, Arg-160, Ser-188, and Gln-280 each bind UDP-N-acetyl-alpha-D-glucosamine; that span reads TGG.

This sequence belongs to the glycosyltransferase 28 family. MurG subfamily.

The protein resides in the cell inner membrane. The catalysed reaction is di-trans,octa-cis-undecaprenyl diphospho-N-acetyl-alpha-D-muramoyl-L-alanyl-D-glutamyl-meso-2,6-diaminopimeloyl-D-alanyl-D-alanine + UDP-N-acetyl-alpha-D-glucosamine = di-trans,octa-cis-undecaprenyl diphospho-[N-acetyl-alpha-D-glucosaminyl-(1-&gt;4)]-N-acetyl-alpha-D-muramoyl-L-alanyl-D-glutamyl-meso-2,6-diaminopimeloyl-D-alanyl-D-alanine + UDP + H(+). Its pathway is cell wall biogenesis; peptidoglycan biosynthesis. Functionally, cell wall formation. Catalyzes the transfer of a GlcNAc subunit on undecaprenyl-pyrophosphoryl-MurNAc-pentapeptide (lipid intermediate I) to form undecaprenyl-pyrophosphoryl-MurNAc-(pentapeptide)GlcNAc (lipid intermediate II). This is UDP-N-acetylglucosamine--N-acetylmuramyl-(pentapeptide) pyrophosphoryl-undecaprenol N-acetylglucosamine transferase from Thermus thermophilus (strain ATCC BAA-163 / DSM 7039 / HB27).